Reading from the N-terminus, the 186-residue chain is Transcription factor FapR (186 aa).

It belongs to the FapR family.

Its function is as follows. Transcriptional factor involved in regulation of membrane lipid biosynthesis by repressing genes involved in fatty acid and phospholipid metabolism. This chain is Transcription factor FapR, found in Halalkalibacterium halodurans (strain ATCC BAA-125 / DSM 18197 / FERM 7344 / JCM 9153 / C-125) (Bacillus halodurans).